The chain runs to 51 residues: DNA-directed RNA polymerases II, IV and V subunit 12 (51 aa).

Residues cysteine 12, cysteine 15, cysteine 29, and cysteine 32 each coordinate Zn(2+).

This sequence belongs to the archaeal Rpo12/eukaryotic RPC10 RNA polymerase subunit family. As to quaternary structure, component of the RNA polymerase II, IV and V complexes. Associates with the mediator complex. Interacts with NRPD1.

The protein localises to the nucleus. DNA-dependent RNA polymerase catalyzes the transcription of DNA into RNA using the four ribonucleoside triphosphates as substrates. Component of RNA polymerase II which synthesizes mRNA precursors and many functional non-coding RNAs. Pol II is the central component of the basal RNA polymerase II transcription machinery. It is composed of mobile elements that move relative to each other. Component of RNA polymerases IV and V which mediate short-interfering RNAs (siRNA) accumulation and subsequent RNA-directed DNA methylation-dependent (RdDM) transcriptional gene silencing (TGS) of endogenous repeated sequences, including transposable elements. This is DNA-directed RNA polymerases II, IV and V subunit 12 (NRPB12) from Arabidopsis thaliana (Mouse-ear cress).